A 192-amino-acid chain; its full sequence is Fe/S biogenesis protein NfuA (192 aa).

The [4Fe-4S] cluster site is built by Cys-150 and Cys-153.

This sequence belongs to the NfuA family. Homodimer. [4Fe-4S] cluster serves as cofactor.

Its function is as follows. Involved in iron-sulfur cluster biogenesis. Binds a 4Fe-4S cluster, can transfer this cluster to apoproteins, and thereby intervenes in the maturation of Fe/S proteins. Could also act as a scaffold/chaperone for damaged Fe/S proteins. This chain is Fe/S biogenesis protein NfuA, found in Vesicomyosocius okutanii subsp. Calyptogena okutanii (strain HA).